Here is a 257-residue protein sequence, read N- to C-terminus: Tryptophan synthase alpha chain (257 aa).

Active-site proton acceptor residues include Glu51 and Asp62.

Belongs to the TrpA family. As to quaternary structure, tetramer of two alpha and two beta chains.

The catalysed reaction is (1S,2R)-1-C-(indol-3-yl)glycerol 3-phosphate + L-serine = D-glyceraldehyde 3-phosphate + L-tryptophan + H2O. The protein operates within amino-acid biosynthesis; L-tryptophan biosynthesis; L-tryptophan from chorismate: step 5/5. Functionally, the alpha subunit is responsible for the aldol cleavage of indoleglycerol phosphate to indole and glyceraldehyde 3-phosphate. The polypeptide is Tryptophan synthase alpha chain (Nitratidesulfovibrio vulgaris (strain ATCC 29579 / DSM 644 / CCUG 34227 / NCIMB 8303 / VKM B-1760 / Hildenborough) (Desulfovibrio vulgaris)).